The following is a 78-amino-acid chain: Translational regulator CsrA (78 aa).

It belongs to the CsrA/RsmA family. Homodimer; the beta-strands of each monomer intercalate to form a hydrophobic core, while the alpha-helices form wings that extend away from the core.

The protein resides in the cytoplasm. Its function is as follows. A translational regulator that binds mRNA to regulate translation initiation and/or mRNA stability. Usually binds in the 5'-UTR at or near the Shine-Dalgarno sequence preventing ribosome-binding, thus repressing translation. Its main target seems to be the major flagellin gene, while its function is anatagonized by FliW. This is Translational regulator CsrA from Geobacter metallireducens (strain ATCC 53774 / DSM 7210 / GS-15).